The sequence spans 190 residues: Crossover junction endodeoxyribonuclease RuvC (190 aa).

Catalysis depends on residues Asp8, Glu67, and Asp139. Positions 8, 67, and 139 each coordinate Mg(2+).

This sequence belongs to the RuvC family. Homodimer which binds Holliday junction (HJ) DNA. The HJ becomes 2-fold symmetrical on binding to RuvC with unstacked arms; it has a different conformation from HJ DNA in complex with RuvA. In the full resolvosome a probable DNA-RuvA(4)-RuvB(12)-RuvC(2) complex forms which resolves the HJ. Mg(2+) serves as cofactor.

The protein resides in the cytoplasm. The enzyme catalyses Endonucleolytic cleavage at a junction such as a reciprocal single-stranded crossover between two homologous DNA duplexes (Holliday junction).. The RuvA-RuvB-RuvC complex processes Holliday junction (HJ) DNA during genetic recombination and DNA repair. Endonuclease that resolves HJ intermediates. Cleaves cruciform DNA by making single-stranded nicks across the HJ at symmetrical positions within the homologous arms, yielding a 5'-phosphate and a 3'-hydroxyl group; requires a central core of homology in the junction. The consensus cleavage sequence is 5'-(A/T)TT(C/G)-3'. Cleavage occurs on the 3'-side of the TT dinucleotide at the point of strand exchange. HJ branch migration catalyzed by RuvA-RuvB allows RuvC to scan DNA until it finds its consensus sequence, where it cleaves and resolves the cruciform DNA. This chain is Crossover junction endodeoxyribonuclease RuvC, found in Pasteurella multocida (strain Pm70).